We begin with the raw amino-acid sequence, 544 residues long: CTP synthase (544 aa).

An amidoligase domain region spans residues 1 to 265 (MTKFIFVTGG…DNIITEQLQL (265 aa)). Serine 13 lines the CTP pocket. Serine 13 is a binding site for UTP. Residues 14-19 (SLGKGI) and aspartate 71 contribute to the ATP site. Mg(2+)-binding residues include aspartate 71 and glutamate 139. Residues 146 to 148 (DIE), 186 to 191 (KTKPTQ), and lysine 222 contribute to the CTP site. Residues 186 to 191 (KTKPTQ) and lysine 222 each bind UTP. The region spanning 290–544 (KIAMVGKYVD…VKAALNNKKA (255 aa)) is the Glutamine amidotransferase type-1 domain. Residue glycine 353 coordinates L-glutamine. Cysteine 380 (nucleophile; for glutamine hydrolysis) is an active-site residue. Residues 381–384 (LGMQ), glutamate 404, and arginine 471 each bind L-glutamine. Residues histidine 517 and glutamate 519 contribute to the active site.

It belongs to the CTP synthase family. As to quaternary structure, homotetramer.

The catalysed reaction is UTP + L-glutamine + ATP + H2O = CTP + L-glutamate + ADP + phosphate + 2 H(+). It catalyses the reaction L-glutamine + H2O = L-glutamate + NH4(+). The enzyme catalyses UTP + NH4(+) + ATP = CTP + ADP + phosphate + 2 H(+). The protein operates within pyrimidine metabolism; CTP biosynthesis via de novo pathway; CTP from UDP: step 2/2. Its activity is regulated as follows. Allosterically activated by GTP, when glutamine is the substrate; GTP has no effect on the reaction when ammonia is the substrate. The allosteric effector GTP functions by stabilizing the protein conformation that binds the tetrahedral intermediate(s) formed during glutamine hydrolysis. Inhibited by the product CTP, via allosteric rather than competitive inhibition. In terms of biological role, catalyzes the ATP-dependent amination of UTP to CTP with either L-glutamine or ammonia as the source of nitrogen. Regulates intracellular CTP levels through interactions with the four ribonucleotide triphosphates. The protein is CTP synthase of Neisseria meningitidis serogroup C / serotype 2a (strain ATCC 700532 / DSM 15464 / FAM18).